A 211-amino-acid polypeptide reads, in one-letter code: Recombination protein RecR (211 aa).

The C4-type zinc-finger motif lies at C70–C85. The Toprim domain maps to K93–Q190.

This sequence belongs to the RecR family.

Its function is as follows. May play a role in DNA repair. It seems to be involved in an RecBC-independent recombinational process of DNA repair. It may act with RecF and RecO. The protein is Recombination protein RecR of Aquifex aeolicus (strain VF5).